Reading from the N-terminus, the 438-residue chain is Coiled-coil domain-containing protein 78 (438 aa).

Coiled-coil stretches lie at residues 74-105 (HLHE…LRGD) and 217-246 (SCQG…YVLR). Residues 345–381 (FSHREDQHGGPGALLSSPKKRPGGASQGGTSEPQGLD) are disordered.

Belongs to the CCDC78 family. In terms of tissue distribution, expressed primarily in skeletal muscle.

The protein localises to the cytoplasm. It localises to the cytoskeleton. It is found in the microtubule organizing center. Its subcellular location is the centrosome. The protein resides in the centriole. The protein localises to the perinuclear region. It localises to the cell membrane. It is found in the sarcolemma. Its subcellular location is the sarcoplasmic reticulum. In terms of biological role, component of the deuterosome, a structure that promotes de novo centriole amplification in multiciliated cells that can generate more than 100 centrioles. Deuterosome-mediated centriole amplification occurs in terminally differentiated multiciliated cells (G1/0) and not in S phase. Essential for centriole amplification and is required for CEP152 localization to the deuterosome. In Homo sapiens (Human), this protein is Coiled-coil domain-containing protein 78 (CCDC78).